We begin with the raw amino-acid sequence, 71 residues long: uncharacterized protein (71 aa).

This is an uncharacterized protein from Saccharomyces cerevisiae (strain ATCC 204508 / S288c) (Baker's yeast).